A 687-amino-acid chain; its full sequence is DNA ligase (687 aa).

Residues D34 to D38, S83 to L84, and E117 contribute to the NAD(+) site. The active-site N6-AMP-lysine intermediate is the K119. NAD(+) is bound by residues R140, E182, K298, and K322. Zn(2+) is bound by residues C416, C419, C434, and C439. Residues E609–E687 form the BRCT domain.

It belongs to the NAD-dependent DNA ligase family. LigA subfamily. It depends on Mg(2+) as a cofactor. Requires Mn(2+) as cofactor.

The catalysed reaction is NAD(+) + (deoxyribonucleotide)n-3'-hydroxyl + 5'-phospho-(deoxyribonucleotide)m = (deoxyribonucleotide)n+m + AMP + beta-nicotinamide D-nucleotide.. Functionally, DNA ligase that catalyzes the formation of phosphodiester linkages between 5'-phosphoryl and 3'-hydroxyl groups in double-stranded DNA using NAD as a coenzyme and as the energy source for the reaction. It is essential for DNA replication and repair of damaged DNA. This is DNA ligase from Anaeromyxobacter dehalogenans (strain 2CP-1 / ATCC BAA-258).